Consider the following 643-residue polypeptide: Inner kinetochore subunit cnp3 (643 aa).

Disordered regions lie at residues 55–209 and 224–386; these read SIHL…AFPD and SIKD…QSDS. Low complexity-rich tracts occupy residues 85-97 and 104-125; these read AASDEASHASSSD and DIPSSPLLMNSRALRASRGSSG. Residues 166-185 show a composition bias toward basic and acidic residues; sequence DFSRIKASPDRKKFEPRRST. Composition is skewed to polar residues over residues 235–261, 295–304, and 313–322; these read YIQTISKPRRSYVQNNKSEQTIKPSKQ, LNRSLANNSQ, and KPLQESSINS. Basic residues-rich tracts occupy residues 332–341 and 360–370; these read VKRKRGRPRK and GAKKPAIRNAK. The a.T hook DNA-binding region spans 333-345; sequence KRKRGRPRKNKLE.

The protein belongs to the CENP-C/MIF2 family. Component of the inner kinetochore constitutive centromere-associated network (CCAN) (also known as central kinetochore Sim4 complex in fission yeast), which is composed of at least cnl2, cnp3, cnp20, fta1, fta2, fta3, fta4, fta6, fta7, mal2, mhf1, mhf2, mis6, mis15, mis17, sim4 and wip1.

The protein localises to the nucleus. It localises to the nucleoplasm. Its function is as follows. Component of the kinetochore, a multiprotein complex that assembles on centromeric DNA and attaches chromosomes to spindle microtubules, mediating chromosome segregation and sister chromatid segregation during meiosis and mitosis. Component of the inner kinetochore constitutive centromere-associated network (CCAN), which serves as a structural platform for outer kinetochore assembly. In Schizosaccharomyces pombe (strain 972 / ATCC 24843) (Fission yeast), this protein is Inner kinetochore subunit cnp3 (cnp3).